The sequence spans 861 residues: Probable beta-glucosidase A (861 aa).

An N-terminal signal peptide occupies residues 1-19 (MKLGWIEVAALAAASVVSA). N-linked (GlcNAc...) asparagine glycosylation is found at N62, N212, and N253. Residue D281 is part of the active site. 9 N-linked (GlcNAc...) asparagine glycosylation sites follow: N316, N323, N355, N443, N524, N543, N565, N669, and N713. Positions 730-754 (DSKYIPEGATDGSAQPRLPASGGAG) are disordered. N846 is a glycosylation site (N-linked (GlcNAc...) asparagine).

The protein belongs to the glycosyl hydrolase 3 family.

Its subcellular location is the secreted. It carries out the reaction Hydrolysis of terminal, non-reducing beta-D-glucosyl residues with release of beta-D-glucose.. It functions in the pathway glycan metabolism; cellulose degradation. In terms of biological role, beta-glucosidases are one of a number of cellulolytic enzymes involved in the degradation of cellulosic biomass. Catalyzes the last step releasing glucose from the inhibitory cellobiose. The polypeptide is Probable beta-glucosidase A (bglA) (Aspergillus oryzae (strain ATCC 42149 / RIB 40) (Yellow koji mold)).